Consider the following 334-residue polypeptide: GTP 3',8-cyclase (334 aa).

The 227-residue stretch at Lys13–Ala239 folds into the Radical SAM core domain. Arg22 is a GTP binding site. [4Fe-4S] cluster is bound by residues Cys29 and Cys33. Tyr35 contributes to the S-adenosyl-L-methionine binding site. [4Fe-4S] cluster is bound at residue Cys36. A GTP-binding site is contributed by Arg73. Gly77 serves as a coordination point for S-adenosyl-L-methionine. Thr104 is a binding site for GTP. Ser128 is a binding site for S-adenosyl-L-methionine. Residue Lys165 coordinates GTP. S-adenosyl-L-methionine is bound at residue Met199. Positions 262 and 265 each coordinate [4Fe-4S] cluster. Arg267–Arg269 is a binding site for GTP. [4Fe-4S] cluster is bound at residue Cys279.

This sequence belongs to the radical SAM superfamily. MoaA family. In terms of assembly, monomer and homodimer. [4Fe-4S] cluster serves as cofactor.

The catalysed reaction is GTP + AH2 + S-adenosyl-L-methionine = (8S)-3',8-cyclo-7,8-dihydroguanosine 5'-triphosphate + 5'-deoxyadenosine + L-methionine + A + H(+). Its pathway is cofactor biosynthesis; molybdopterin biosynthesis. Catalyzes the cyclization of GTP to (8S)-3',8-cyclo-7,8-dihydroguanosine 5'-triphosphate. This chain is GTP 3',8-cyclase, found in Vibrio parahaemolyticus serotype O3:K6 (strain RIMD 2210633).